The following is a 123-amino-acid chain: Small ribosomal subunit protein uS12 (123 aa).

The segment at 1–23 (MPTISQLVKKGREKVEKKTKSPA) is disordered. Residue D89 is modified to 3-methylthioaspartic acid.

Belongs to the universal ribosomal protein uS12 family. As to quaternary structure, part of the 30S ribosomal subunit. Contacts proteins S8 and S17. May interact with IF1 in the 30S initiation complex.

In terms of biological role, with S4 and S5 plays an important role in translational accuracy. Interacts with and stabilizes bases of the 16S rRNA that are involved in tRNA selection in the A site and with the mRNA backbone. Located at the interface of the 30S and 50S subunits, it traverses the body of the 30S subunit contacting proteins on the other side and probably holding the rRNA structure together. The combined cluster of proteins S8, S12 and S17 appears to hold together the shoulder and platform of the 30S subunit. In Thermodesulfovibrio yellowstonii (strain ATCC 51303 / DSM 11347 / YP87), this protein is Small ribosomal subunit protein uS12.